A 398-amino-acid chain; its full sequence is Small ribosomal subunit protein mS78 (rPPR3a) (398 aa).

A mitochondrion-targeting transit peptide spans 1-19 (MSSLSRVLRGTFNTCPIRR). 7 PPR repeats span residues 108-142 (KEGF…DCKR), 143-173 (SVLS…LPGK), 179-213 (DIVS…GLKP), 214-248 (DIVT…NVAI), 249-283 (DIRT…GLKP), 284-318 (DVFS…GYRP), and 319-353 (DKAT…RYLV).

Belongs to the PPR family. P subfamily. Component of the mitochondrial ribosome small subunit.

It localises to the mitochondrion. This chain is Small ribosomal subunit protein mS78 (rPPR3a), found in Arabidopsis thaliana (Mouse-ear cress).